The sequence spans 122 residues: MFARVSTLFAMFFLGLALMVSATPAALKPVARDTIPASQCNTGDLQCCNTVENADSPSAAALLGLLGVVVQGLDVLVGLTCTPITVIGVGSGANCVQQPVCCENNNFNGLINIGCTPVNLGL.

A signal peptide spans 1 to 22 (MFARVSTLFAMFFLGLALMVSA). 4 cysteine pairs are disulfide-bonded: Cys40/Cys101, Cys47/Cys95, Cys48/Cys81, and Cys102/Cys115.

This sequence belongs to the fungal hydrophobin family. As to quaternary structure, self-assembles to form functional amyloid fibrils called rodlets. Self-assembly into fibrillar rodlets occurs spontaneously at hydrophobic:hydrophilic interfaces and the rodlets further associate laterally to form amphipathic monolayers.

The protein localises to the secreted. Its subcellular location is the cell wall. Aerial growth, conidiation, and dispersal of filamentous fungi in the environment rely upon a capability of their secreting small amphipathic proteins called hydrophobins (HPBs) with low sequence identity. Class I can self-assemble into an outermost layer of rodlet bundles on aerial cell surfaces, conferring cellular hydrophobicity that supports fungal growth, development and dispersal; whereas Class II form highly ordered films at water-air interfaces through intermolecular interactions but contribute nothing to the rodlet structure. Hah2 is a class I hydrophobin that is involved in aerial growth of mycelia, but does not play a role in pathogenesis. The chain is Class I hydrophobin 2 from Heterobasidion annosum (Root rot fungus).